The sequence spans 970 residues: Unconventional myosin-XIX (970 aa).

A Myosin motor domain is found at Tyr35–Ala758. Residue Gly132 to Thr139 coordinates ATP. The interval Leu602–Ser624 is actin-binding. Phosphoserine is present on Ser685. IQ domains lie at Arg759–Glu779 and Gln783–Val812. Positions Met824 to Gly970 are myMOMA region.

The protein belongs to the TRAFAC class myosin-kinesin ATPase superfamily. Myosin family. Myosin is a hexamer of 2 heavy chains and 4 light chains: interacts with myosin light chains MYL9 and MYL12B. As to expression, widely expressed in multiple tissues and cell lines.

It is found in the mitochondrion outer membrane. Its subcellular location is the cytoplasm. The protein resides in the cytoskeleton. In terms of biological role, actin-based motor molecule with ATPase activity that localizes to the mitochondrion outer membrane. Motor protein that moves towards the plus-end of actin filaments. Required for mitochondrial inheritance during mitosis. May be involved in mitochondrial transport or positioning. The chain is Unconventional myosin-XIX from Homo sapiens (Human).